Reading from the N-terminus, the 140-residue chain is Small ribosomal subunit protein uS19 (140 aa).

The interval 120–140 (RPKHSAPGIGATRSSAHVSKK) is disordered. Positions 131–140 (TRSSAHVSKK) are enriched in polar residues.

The protein belongs to the universal ribosomal protein uS19 family.

Protein S19 forms a complex with S13 that binds strongly to the 16S ribosomal RNA. This chain is Small ribosomal subunit protein uS19, found in Nanoarchaeum equitans (strain Kin4-M).